A 267-amino-acid polypeptide reads, in one-letter code: Phosphatidylglycerol--prolipoprotein diacylglyceryl transferase (267 aa).

Helical transmembrane passes span 21-41 (VSLH…YWLG), 60-80 (LLFN…VFFY), and 95-115 (IWEG…AMLW). R143 provides a ligand contact to a 1,2-diacyl-sn-glycero-3-phospho-(1'-sn-glycerol). Transmembrane regions (helical) follow at residues 203–223 (GSVA…VEYF) and 240–260 (GQLL…VAYY).

Belongs to the Lgt family.

Its subcellular location is the cell inner membrane. The catalysed reaction is L-cysteinyl-[prolipoprotein] + a 1,2-diacyl-sn-glycero-3-phospho-(1'-sn-glycerol) = an S-1,2-diacyl-sn-glyceryl-L-cysteinyl-[prolipoprotein] + sn-glycerol 1-phosphate + H(+). It functions in the pathway protein modification; lipoprotein biosynthesis (diacylglyceryl transfer). In terms of biological role, catalyzes the transfer of the diacylglyceryl group from phosphatidylglycerol to the sulfhydryl group of the N-terminal cysteine of a prolipoprotein, the first step in the formation of mature lipoproteins. The protein is Phosphatidylglycerol--prolipoprotein diacylglyceryl transferase of Glaesserella parasuis serovar 5 (strain SH0165) (Haemophilus parasuis).